Consider the following 800-residue polypeptide: Nucleolar complex protein 3 homolog (800 aa).

Basic residues-rich tracts occupy residues 1 to 19 and 42 to 53; these read MGPA…RKLL and KKQRKEQRKLHK. 2 disordered regions span residues 1–91 and 167–197; these read MGPA…TDMM and KPVL…SAPL. A compositionally biased stretch (basic and acidic residues) spans 65–74; it reads PLERYKKRPE. Positions 449 to 490 form a coiled coil; it reads SFKEKRKNLSRMQRKWKKAEEKLQKELLEAEATESKEKKIKL. A disordered region spans residues 780–800; that stretch reads LQEEPEQMSLDFTSPHTQQEP. Over residues 789 to 800 the composition is skewed to polar residues; it reads LDFTSPHTQQEP.

The protein belongs to the CBF/MAK21 family.

Its subcellular location is the nucleus. It is found in the nucleolus. The protein is Nucleolar complex protein 3 homolog (noc3l) of Danio rerio (Zebrafish).